The sequence spans 213 residues: Ribosomal RNA large subunit methyltransferase E (213 aa).

S-adenosyl-L-methionine-binding residues include glycine 59, phenylalanine 61, aspartate 79, aspartate 97, and aspartate 121. The active-site Proton acceptor is lysine 161.

The protein belongs to the class I-like SAM-binding methyltransferase superfamily. RNA methyltransferase RlmE family.

The protein resides in the cytoplasm. The catalysed reaction is uridine(2552) in 23S rRNA + S-adenosyl-L-methionine = 2'-O-methyluridine(2552) in 23S rRNA + S-adenosyl-L-homocysteine + H(+). In terms of biological role, specifically methylates the uridine in position 2552 of 23S rRNA at the 2'-O position of the ribose in the fully assembled 50S ribosomal subunit. This is Ribosomal RNA large subunit methyltransferase E from Myxococcus xanthus (strain DK1622).